Here is a 1154-residue protein sequence, read N- to C-terminus: PDZ domain-containing protein 8 (1154 aa).

A helical transmembrane segment spans residues 2–24 (GLLLMILASAVLGSFLTLLAQFF). The tract at residues 66-90 (DEEPSGAAPEGGATPTAAPETPAPP) is disordered. Low complexity predominate over residues 70 to 85 (SGAAPEGGATPTAAPE). One can recognise an SMP-LTD domain in the interval 91–294 (TRETCYFLNA…LPNYKIRFKP (204 aa)). Positions 366-449 (TVELIKGNLQ…RVLVYYERPV (84 aa)) constitute a PDZ domain. 3 positions are modified to phosphoserine: S496, S521, and S538. Positions 548–612 (GSHPLPPKIQ…SADAPNQAEP (65 aa)) are disordered. The Phorbol-ester/DAG-type zinc finger occupies 840-891 (KHSFQDTQFQNPTWCDYCKKKVWTKAASQCMFCAYVCHKKCQEKCLAETSVC). A disordered region spans residues 955–999 (RLSEPGTDLVEPSPKHTPNTSDNEGSDTEVCGPNSPSKRGNSTGI). S967 and S980 each carry phosphoserine. Over residues 988-998 (NSPSKRGNSTG) the composition is skewed to polar residues. The stretch at 1028–1063 (PTEERIQKLEFMLDKLQNEIDQELEHNNSLVREEKE) forms a coiled coil. Over residues 1132 to 1144 (SQLIDSQPFSSIS) the composition is skewed to polar residues. Residues 1132 to 1154 (SQLIDSQPFSSISDDLFGPSESV) form a disordered region.

In terms of assembly, interacts with MSN. (Microbial infection) Interacts with HIV-1 Gag polyprotein p55.

The protein localises to the endoplasmic reticulum membrane. In terms of biological role, molecular tethering protein that connects endoplasmic reticulum and mitochondria membranes. PDZD8-dependent endoplasmic reticulum-mitochondria membrane tethering is essential for endoplasmic reticulum-mitochondria Ca(2+) transfer. In neurons, involved in the regulation of dendritic Ca(2+) dynamics by regulating mitochondrial Ca(2+) uptake in neurons. Plays an indirect role in the regulation of cell morphology and cytoskeletal organization. May inhibit herpes simplex virus 1 infection at an early stage. This Homo sapiens (Human) protein is PDZ domain-containing protein 8.